Here is a 198-residue protein sequence, read N- to C-terminus: Na(+)-translocating NADH-quinone reductase subunit E (198 aa).

6 helical membrane-spanning segments follow: residues S11–V31, F39–V59, F77–I97, G110–V130, V140–I160, and L176–V196.

It belongs to the NqrDE/RnfAE family. As to quaternary structure, composed of six subunits; NqrA, NqrB, NqrC, NqrD, NqrE and NqrF.

The protein localises to the cell inner membrane. It carries out the reaction a ubiquinone + n Na(+)(in) + NADH + H(+) = a ubiquinol + n Na(+)(out) + NAD(+). NQR complex catalyzes the reduction of ubiquinone-1 to ubiquinol by two successive reactions, coupled with the transport of Na(+) ions from the cytoplasm to the periplasm. NqrA to NqrE are probably involved in the second step, the conversion of ubisemiquinone to ubiquinol. This chain is Na(+)-translocating NADH-quinone reductase subunit E, found in Aliivibrio fischeri (strain ATCC 700601 / ES114) (Vibrio fischeri).